Consider the following 621-residue polypeptide: DNA mismatch repair protein MutL (621 aa).

It belongs to the DNA mismatch repair MutL/HexB family.

Its function is as follows. This protein is involved in the repair of mismatches in DNA. It is required for dam-dependent methyl-directed DNA mismatch repair. May act as a 'molecular matchmaker', a protein that promotes the formation of a stable complex between two or more DNA-binding proteins in an ATP-dependent manner without itself being part of a final effector complex. This Petrotoga mobilis (strain DSM 10674 / SJ95) protein is DNA mismatch repair protein MutL.